Reading from the N-terminus, the 118-residue chain is Basic phospholipase A2 PA-13 (118 aa).

7 cysteine pairs are disulfide-bonded: Cys-11–Cys-71, Cys-27–Cys-117, Cys-29–Cys-45, Cys-44–Cys-98, Cys-51–Cys-91, Cys-60–Cys-84, and Cys-78–Cys-89. Ca(2+) is bound by residues Tyr-28, Gly-30, and Gly-32. The active site involves His-48. Residue Asp-49 participates in Ca(2+) binding. Asp-92 is an active-site residue.

It belongs to the phospholipase A2 family. Group I subfamily. D49 sub-subfamily. The cofactor is Ca(2+). In terms of tissue distribution, expressed by the venom gland.

It is found in the secreted. It catalyses the reaction a 1,2-diacyl-sn-glycero-3-phosphocholine + H2O = a 1-acyl-sn-glycero-3-phosphocholine + a fatty acid + H(+). In terms of biological role, PLA2 catalyzes the calcium-dependent hydrolysis of the 2-acyl groups in 3-sn-phosphoglycerides. The sequence is that of Basic phospholipase A2 PA-13 from Pseudechis australis (Mulga snake).